A 314-amino-acid polypeptide reads, in one-letter code: 3'-5' exoribonuclease YhaM (314 aa).

Positions 14 to 90 (VDLYLLIKSS…QLKLRNIRPA (77 aa)) form a DNA-binding region, OB. An HD domain is found at 163–279 (HVVSMLNLAK…LHYIDNLDAK (117 aa)).

The protein belongs to the YhaM family.

Functionally, shows a 3'-5' exoribonuclease activity. The polypeptide is 3'-5' exoribonuclease YhaM (Bacillus licheniformis (strain ATCC 14580 / DSM 13 / JCM 2505 / CCUG 7422 / NBRC 12200 / NCIMB 9375 / NCTC 10341 / NRRL NRS-1264 / Gibson 46)).